The primary structure comprises 120 residues: Membrane-anchored ubiquitin-fold protein 5 (120 aa).

The 66-residue stretch at 7–72 (IELKFRLADG…ILENNKTLSE (66 aa)) folds into the Ubiquitin-like domain. The S-palmitoyl cysteine moiety is linked to residue Cys115. Cys117 is modified (cysteine methyl ester). Residue Cys117 is the site of S-geranylgeranyl cysteine attachment. Residues 118-120 (CIL) constitute a propeptide, removed in mature form.

In terms of tissue distribution, ubiquitous.

It is found in the cell membrane. Its function is as follows. May serve as docking site to facilitate the association of other proteins to the plasma membrane. This chain is Membrane-anchored ubiquitin-fold protein 5 (MUB5), found in Arabidopsis thaliana (Mouse-ear cress).